A 203-amino-acid chain; its full sequence is MARFRGSITKVSRRLGIALTPKAEKYMERRPFAPGQHGQGRRSKVSEYALQLREKQKMKYLYGILEKQFRNYYKKAVSQRGVTGDNLVRLIERRFDNVVFRAGFAPSRAGSRQLVSHGHLLVNGKKVNIPSYMVSPGDLIEFRPKSKNMSAVSDALSKTPDARIPSWIQVDKANQKAVFLAVPERVEVQEPFNEQLVVELYSK.

The S4 RNA-binding domain occupies 93 to 153 (RRFDNVVFRA…PKSKNMSAVS (61 aa)).

The protein belongs to the universal ribosomal protein uS4 family. As to quaternary structure, part of the 30S ribosomal subunit. Contacts protein S5. The interaction surface between S4 and S5 is involved in control of translational fidelity.

In terms of biological role, one of the primary rRNA binding proteins, it binds directly to 16S rRNA where it nucleates assembly of the body of the 30S subunit. Its function is as follows. With S5 and S12 plays an important role in translational accuracy. This Chlorobium phaeovibrioides (strain DSM 265 / 1930) (Prosthecochloris vibrioformis (strain DSM 265)) protein is Small ribosomal subunit protein uS4.